A 217-amino-acid chain; its full sequence is Serine acetyltransferase (217 aa).

It belongs to the transferase hexapeptide repeat family.

It localises to the cytoplasm. The catalysed reaction is L-serine + acetyl-CoA = O-acetyl-L-serine + CoA. It participates in amino-acid biosynthesis; L-cysteine biosynthesis; L-cysteine from L-serine: step 1/2. With respect to regulation, inhibited by cysteine. In terms of biological role, catalyzes the acetylation of serine by acetyl-CoA to produce O-acetylserine (OAS). The chain is Serine acetyltransferase (cysE) from Bacillus subtilis (strain 168).